Reading from the N-terminus, the 764-residue chain is MKAGALHCRCAKCFSLPVRKRVRKRASAVSLLSLPEELLVFVLQCLSAEDLLSVRAVHSHLCDIIDTNASIWARVSFKDRWPAPDTVWLFERAAEKGNFEAAVKLGIAYLYNEGPLLSEEGRADLCGRMASRYLSLSESLRSPQAEPFIWLFIRPPWSVSGSCCKAVVFDRLQAECQTSPGRKGTLLYCLARVLQLFDDEEKRDEAELMLKESSRCGSLQSSYLLWAISRASSTADPGRYLQCMRTLRDYAARGCWEAQLAFVKSCGSANPLGLEPRACSELVSQFFQTGPSALRYQPHLQGQDITTKRYILVDWLVEVTTTKDFSSQVLHVTISCVDRYLHLRSVPKAQLQLLGIACMVICTRFISKEILTIREAVWLTDNTYQYEDLVHMMGEVISVLDGKIRTPTVLDYGEVLLSLLPVERRTAHLFSYICELSLLCSPATVPGPARLASAILLLTRALHNYVPVWPVQLEENTGFSKQDLVSCALTLYIKCFGQDVPKDYRHVSLTGVKQRFEDDSYQQISKDTVMGFKELCHVLEVPEVEPQVEVSSTSGQITEMHTFLSSPTSSSKRRRADSMQAHRGAFVATPTAELSNQEETLLGDFLDWSLDTSCSGYEGDRESEGEKDGEISTMEVQMELPLDCADRQTHCCLLSSDDTSLCEEDEQEPPTGGSKPWTRHLSSSSTSSSSSSCGFCTDRHSSGYSSIQSFPSPTGSSALVSPQNPPGVPSQRIRRQVKRKNTAAHSAGEAEQEDDAANLAFLSF.

The Nuclear localization signal 1 signature appears at 19–27 (RKRVRKRAS). One can recognise an F-box domain in the interval 28–75 (AVSLLSLPEELLVFVLQCLSAEDLLSVRAVHSHLCDIIDTNASIWARV). Residues 307 to 404 (TKRYILVDWL…EVISVLDGKI (98 aa)) enclose the Cyclin N-terminal domain. The D box 1 signature appears at 309-312 (RYIL). Positions 570–575 (SSKRRR) match the Nuclear localization signal 2 motif. Positions 583-738 (RGAFVATPTA…PSQRIRRQVK (156 aa)) are PEST. The tract at residues 662 to 754 (CEEDEQEPPT…HSAGEAEQED (93 aa)) is disordered. A compositionally biased stretch (low complexity) spans 682 to 692 (SSSSTSSSSSS). The segment covering 702–722 (SGYSSIQSFPSPTGSSALVSP) has biased composition (polar residues). The span at 732 to 742 (RIRRQVKRKNT) shows a compositional bias: basic residues.

This sequence belongs to the cyclin family. Cyclin AB subfamily. As to quaternary structure, component of the SCF(CCNF) complex. In terms of tissue distribution, expressed in the brain.

It is found in the nucleus. It localises to the cytoplasm. The protein localises to the perinuclear region. The protein resides in the cytoskeleton. Its subcellular location is the microtubule organizing center. It is found in the centrosome. It localises to the centriole. Functionally, substrate recognition component of a SCF (SKP1-CUL1-F-box protein) E3 ubiquitin-protein ligase complex which mediates the ubiquitination and subsequent proteasomal degradation of target proteins. The SCF(CCNF) E3 ubiquitin-protein ligase complex is an integral component of the ubiquitin proteasome system (UPS) and links proteasome degradation to the cell cycle. Mediates the substrate recognition and the proteasomal degradation of various target proteins during G2 phase involved in the regulation of cell cycle progression and in the maintenance of genome stability. May play a role in motor neuron development and axonal outgrowth. The chain is Cyclin-F (ccnf) from Danio rerio (Zebrafish).